The primary structure comprises 310 residues: Putative methyltransferase mtx subunit H (310 aa).

This sequence belongs to the MtrH family. As to quaternary structure, may be part of a complex composed of 3 subunits; MtxA, MtxH and MtxX.

The sequence is that of Putative methyltransferase mtx subunit H (mtxH) from Methanosarcina mazei (strain ATCC BAA-159 / DSM 3647 / Goe1 / Go1 / JCM 11833 / OCM 88) (Methanosarcina frisia).